A 384-amino-acid polypeptide reads, in one-letter code: Probable RNA 3'-terminal phosphate cyclase-like protein (384 aa).

This sequence belongs to the RNA 3'-terminal cyclase family. Type 2 subfamily. In terms of assembly, part of the small subunit (SSU) processome, composed of more than 70 proteins and the RNA chaperone small nucleolar RNA (snoRNA) U3.

Its subcellular location is the nucleus. It is found in the nucleolus. Its function is as follows. Part of the small subunit (SSU) processome, first precursor of the small eukaryotic ribosomal subunit. During the assembly of the SSU processome in the nucleolus, many ribosome biogenesis factors, an RNA chaperone and ribosomal proteins associate with the nascent pre-rRNA and work in concert to generate RNA folding, modifications, rearrangements and cleavage as well as targeted degradation of pre-ribosomal RNA by the RNA exosome. Does not have cyclase activity. The polypeptide is Probable RNA 3'-terminal phosphate cyclase-like protein (Rtc1) (Drosophila melanogaster (Fruit fly)).